Consider the following 357-residue polypeptide: uncharacterized protein (357 aa).

Serine 72 is modified (phosphoserine). Disordered regions lie at residues 79–98 (GVNEDHYTGGGSSNNNRPSR), 264–290 (QKQLQGNSKPVKNLPNSNAKQRAGASV), and 323–357 (ISDEDEEDEEEDSFQQRSANNRILPAEILSNEPLK). The span at 324 to 335 (SDEDEEDEEEDS) shows a compositional bias: acidic residues.

This is an uncharacterized protein from Saccharomyces cerevisiae (strain ATCC 204508 / S288c) (Baker's yeast).